A 1331-amino-acid polypeptide reads, in one-letter code: Disease resistance protein RUN1 (1331 aa).

The tract at residues 1-20 is disordered; sequence MASTSSSRASSSSSSSSTPS. The 166-residue stretch at 25–190 folds into the TIR domain; sequence ITYDVFLSFR…EITDSIFRRL (166 aa). Residues 34 to 39 and G66 contribute to the NAD(+) site; that span reads RGEDTR. Residue E100 is part of the active site. The 229-residue stretch at 206–434 folds into the NB-ARC domain; it reads SHVKEMIWRL…REPEAEILSV (229 aa). LRR repeat units follow at residues 429 to 452, 480 to 509, 540 to 565, 616 to 638, 648 to 673, 684 to 708, 709 to 732, 734 to 756, 757 to 779, 781 to 803, 804 to 826, 828 to 850, 851 to 873, 875 to 897, 898 to 920, 922 to 944, 945 to 967, 969 to 991, 992 to 1014, and 1017 to 1040; these read AEIL…IFLD, IKNL…GWEI, IKRV…AFAK, SYEL…NFDG, CSNI…SYSR, MPNL…VGNM, KKLT…IGDL, SLEI…GGNM, KSLT…IGDL, SLKY…GGNM, KSLR…IRDL, SLER…GGNM, KSLM…IGDL, SLVS…GGNM, KSLN…IGDL, SLMR…VGNM, KSLE…IGDL, and LEKL…AIDA. A Nuclear localization signal motif is present at residues 1287–1291; sequence RKRRR.

Belongs to the disease resistance TIR-NB-LRR family.

It localises to the nucleus. The protein resides in the cytoplasm. The catalysed reaction is NAD(+) + H2O = ADP-D-ribose + nicotinamide + H(+). It catalyses the reaction NADP(+) + H2O = ADP-D-ribose 2'-phosphate + nicotinamide + H(+). Functionally, disease resistance (R) protein that confers resistance to multiple powdery and downy mildew by promoting cell death. Acts as a NAD(+) hydrolase (NADase): in response to activation, catalyzes cleavage of NAD(+) into ADP-D-ribose (ADPR) and nicotinamide; NAD(+) cleavage triggering a defense system that promotes cell death. Also able to hydrolyze NADP(+), but not other NAD(+)-related molecules. The polypeptide is Disease resistance protein RUN1 (Vitis rotundifolia (Muscadine grape)).